The sequence spans 30 residues: Protamine-YII (30 aa).

The disordered stretch occupies residues 1-30; sequence PRRRTRRASRPVRRRRPRRVSRRRRARRRR.

Testis.

It localises to the nucleus. The protein localises to the chromosome. Its function is as follows. Protamines substitute for histones in the chromatin of sperm during the haploid phase of spermatogenesis. They compact sperm DNA into a highly condensed, stable and inactive complex. The sequence is that of Protamine-YII from Clupea harengus (Atlantic herring).